The chain runs to 122 residues: Autophagy-related protein 8a (122 aa).

Residues 1–21 (MAKSSFKISNPLEARMSESSR) are disordered. Residue glycine 117 is the site of Phosphatidylethanolamine amidated glycine attachment. Positions 118–122 (SLTVA) are cleaved as a propeptide — removed in mature form.

It belongs to the ATG8 family. In terms of assembly, interacts with ATG4B. Interacts with NBR1. In terms of processing, the C-terminal 5 residues are removed by ATG4 to expose Gly-117 at the C-terminus. This Gly-117 forms then a thioester bond with the 'Cys-558' of ATG7 (E1-like activating enzyme) before being transferred to the 'Cys-258' of ATG3 (the specific E2 conjugating enzyme), in order to be finally amidated with phosphatidylethanolamine. This lipid modification anchors ATG8 to autophagosomes. As to expression, constitutively expressed.

Its subcellular location is the cytoplasmic vesicle. It is found in the autophagosome membrane. The protein localises to the vacuole membrane. The protein resides in the cytoplasm. It localises to the cytoskeleton. Functionally, ubiquitin-like modifier involved in autophagosomes formation. May mediate the delivery of the autophagosomes to the vacuole via the microtubule cytoskeleton. The protein is Autophagy-related protein 8a (ATG8A) of Arabidopsis thaliana (Mouse-ear cress).